The chain runs to 438 residues: Tyrosine--tRNA ligase (438 aa).

L-tyrosine is bound at residue tyrosine 47. The 'HIGH' region motif lies at 52 to 61 (PTATSLHVGG). L-tyrosine-binding residues include tyrosine 183 and glutamine 187. The 'KMSKS' region motif lies at 243 to 247 (KMGKT). An ATP-binding site is contributed by lysine 246. The S4 RNA-binding domain occupies 370 to 436 (LWIVEALQTA…GKRKYALLKI (67 aa)).

This sequence belongs to the class-I aminoacyl-tRNA synthetase family. TyrS type 1 subfamily. Homodimer.

Its subcellular location is the cytoplasm. It carries out the reaction tRNA(Tyr) + L-tyrosine + ATP = L-tyrosyl-tRNA(Tyr) + AMP + diphosphate + H(+). Catalyzes the attachment of tyrosine to tRNA(Tyr) in a two-step reaction: tyrosine is first activated by ATP to form Tyr-AMP and then transferred to the acceptor end of tRNA(Tyr). The protein is Tyrosine--tRNA ligase of Rhodopirellula baltica (strain DSM 10527 / NCIMB 13988 / SH1).